The primary structure comprises 262 residues: Type III pantothenate kinase (262 aa).

An ATP-binding site is contributed by 6 to 13 (DVGNTNAV). Residues Tyr-100 and 107-110 (GADR) each bind substrate. Asp-109 functions as the Proton acceptor in the catalytic mechanism. Asp-129 lines the K(+) pocket. ATP is bound at residue Thr-132. Thr-184 provides a ligand contact to substrate.

The protein belongs to the type III pantothenate kinase family. In terms of assembly, homodimer. The cofactor is NH4(+). K(+) is required as a cofactor.

Its subcellular location is the cytoplasm. It catalyses the reaction (R)-pantothenate + ATP = (R)-4'-phosphopantothenate + ADP + H(+). The protein operates within cofactor biosynthesis; coenzyme A biosynthesis; CoA from (R)-pantothenate: step 1/5. Functionally, catalyzes the phosphorylation of pantothenate (Pan), the first step in CoA biosynthesis. This chain is Type III pantothenate kinase, found in Bacillus cytotoxicus (strain DSM 22905 / CIP 110041 / 391-98 / NVH 391-98).